We begin with the raw amino-acid sequence, 137 residues long: MLQPKRTKFRKAFKGRIHGAAKGGFELNFGEFGLKAMEPERITARQIEAARRAMTRHMKRAGRVWIRIFPDVPVSKKPTEVRMGKGKGAPEFWAARVAPGRIMFELDGVPADLAREALRLAAAKLPIKTRFIQRIEE.

Belongs to the universal ribosomal protein uL16 family. Part of the 50S ribosomal subunit.

Binds 23S rRNA and is also seen to make contacts with the A and possibly P site tRNAs. This Beijerinckia indica subsp. indica (strain ATCC 9039 / DSM 1715 / NCIMB 8712) protein is Large ribosomal subunit protein uL16.